The primary structure comprises 187 residues: Large ribosomal subunit protein bL17 (187 aa).

This sequence belongs to the bacterial ribosomal protein bL17 family. As to quaternary structure, part of the 50S ribosomal subunit. Contacts protein L32.

The sequence is that of Large ribosomal subunit protein bL17 from Rhodococcus opacus (strain B4).